Consider the following 331-residue polypeptide: MVSVGIVGTGSYVPDKVLTNFDLEQMVDTNDQWIVSRTGIKERHIAEPETPVSELCYQAAVRALEDAKLAPEELDLVIVATITPDFVFPATACLVAERLGAKKAAGFDLQAACTGFLYGVATAAQFIATGIYKNALVIGGETLSKILNWEDRGTCILFGDGAGAAVLQQVEEGYGFLGYDLGMDGAGGSLLTMPGGGSMHPASAETVAKKMHTIQMAGSEVFKFAVRIMGETALKALDKAGLGIGDVDCLIPHQANTRIVDAAVKRLGIDAGKVVVNLDRYGNMSAASIPVALDEAARSGRLNYGDIMVMVGFGGGLTWGAAVVKWSKRGV.

Catalysis depends on residues cysteine 113 and histidine 253. The ACP-binding stretch occupies residues 254–258 (QANTR). Residue asparagine 283 is part of the active site.

Belongs to the thiolase-like superfamily. FabH family. Homodimer.

The protein localises to the cytoplasm. It catalyses the reaction malonyl-[ACP] + acetyl-CoA + H(+) = 3-oxobutanoyl-[ACP] + CO2 + CoA. It functions in the pathway lipid metabolism; fatty acid biosynthesis. Its function is as follows. Catalyzes the condensation reaction of fatty acid synthesis by the addition to an acyl acceptor of two carbons from malonyl-ACP. Catalyzes the first condensation reaction which initiates fatty acid synthesis and may therefore play a role in governing the total rate of fatty acid production. Possesses both acetoacetyl-ACP synthase and acetyl transacylase activities. Its substrate specificity determines the biosynthesis of branched-chain and/or straight-chain of fatty acids. In Desulfitobacterium hafniense (strain Y51), this protein is Beta-ketoacyl-[acyl-carrier-protein] synthase III.